The primary structure comprises 479 residues: Cysteine--tRNA ligase (479 aa).

Residue Cys28 coordinates Zn(2+). Positions 30-40 (PTVYDHAHLGH) match the 'HIGH' region motif. 3 residues coordinate Zn(2+): Cys207, His232, and Glu236. A 'KMSKS' region motif is present at residues 264–268 (KMSKS). Lys267 is a binding site for ATP.

This sequence belongs to the class-I aminoacyl-tRNA synthetase family. Requires Zn(2+) as cofactor.

It is found in the cytoplasm. The enzyme catalyses tRNA(Cys) + L-cysteine + ATP = L-cysteinyl-tRNA(Cys) + AMP + diphosphate. The chain is Cysteine--tRNA ligase from Methanococcus aeolicus (strain ATCC BAA-1280 / DSM 17508 / OCM 812 / Nankai-3).